The chain runs to 377 residues: PqqA peptide cyclase (377 aa).

The Radical SAM core domain maps to 12-228 (FGIPLAVLLE…EAARERLKGQ (217 aa)). 3 residues coordinate [4Fe-4S] cluster: Cys26, Cys30, and Cys33.

Belongs to the radical SAM superfamily. PqqE family. In terms of assembly, interacts with PqqD. The interaction is necessary for activity of PqqE. Requires [4Fe-4S] cluster as cofactor.

The enzyme catalyses [PQQ precursor protein] + S-adenosyl-L-methionine = E-Y cross-linked-[PQQ precursor protein] + 5'-deoxyadenosine + L-methionine + H(+). It functions in the pathway cofactor biosynthesis; pyrroloquinoline quinone biosynthesis. Its function is as follows. Catalyzes the cross-linking of a glutamate residue and a tyrosine residue in the PqqA protein as part of the biosynthesis of pyrroloquinoline quinone (PQQ). The protein is PqqA peptide cyclase of Rhodopseudomonas palustris (strain ATCC BAA-98 / CGA009).